A 99-amino-acid chain; its full sequence is MSGPNGDPDISAEGIIEDEDEFNEEEYAAIDSMLDQINSCLDDIEERNDALNGKLQELLESNRAARRDFRQQITDHADLPPPANDDDEDEQSRDAQKKD.

Positions leucine 34–glutamine 71 form a coiled coil. Over residues arginine 66–aspartate 78 the composition is skewed to basic and acidic residues. Positions arginine 66–aspartate 99 are disordered.

Belongs to the UPF0184 (EST00098) family.

The protein localises to the cell junction. It localises to the cytoplasm. Its subcellular location is the cytoskeleton. Functionally, essential for intermediate filament organization in intestinal cells, interacts with intermediate filament and regulates intestinal lumen morphology. This chain is Bublin coiled-coil protein (bbln), found in Danio rerio (Zebrafish).